We begin with the raw amino-acid sequence, 343 residues long: L-threonine 3-dehydrogenase (343 aa).

Cys40 is a Zn(2+) binding site. Residues Thr42 and His45 each act as charge relay system in the active site. Residues His65, Glu66, Cys95, Cys98, Cys101, and Cys109 each contribute to the Zn(2+) site. NAD(+) contacts are provided by residues Ile177, Asp197, Arg202, 264–266 (LGI), and 288–289 (IY).

Belongs to the zinc-containing alcohol dehydrogenase family. Homotetramer. The cofactor is Zn(2+).

Its subcellular location is the cytoplasm. The enzyme catalyses L-threonine + NAD(+) = (2S)-2-amino-3-oxobutanoate + NADH + H(+). It participates in amino-acid degradation; L-threonine degradation via oxydo-reductase pathway; glycine from L-threonine: step 1/2. Functionally, catalyzes the NAD(+)-dependent oxidation of L-threonine to 2-amino-3-ketobutyrate. The protein is L-threonine 3-dehydrogenase of Aliivibrio fischeri (strain ATCC 700601 / ES114) (Vibrio fischeri).